Reading from the N-terminus, the 328-residue chain is Sphingolipid delta(4)-desaturase DES1-like (328 aa).

3 consecutive transmembrane segments (helical) span residues 50–70, 78–98, and 114–134; these read PLAF…ATLL, ILTV…LAIH, and WLGI…FQKY. Residues 98–102 carry the Histidine box-1 motif; sequence HELSH. Residues 135–139 carry the Histidine box-2 motif; sequence HLEHH. A run of 3 helical transmembrane segments spans residues 164-184, 192-212, and 217-237; these read LSKS…PLFL, WEFT…YFFG, and AYLI…GHFI. The short motif at 266-270 is the Histidine box-3 element; the sequence is HNEHH.

This sequence belongs to the fatty acid desaturase type 1 family. DEGS subfamily.

The protein localises to the endoplasmic reticulum membrane. The catalysed reaction is an N-acylsphinganine + 2 Fe(II)-[cytochrome b5] + O2 + 2 H(+) = an N-acylsphing-4-enine + 2 Fe(III)-[cytochrome b5] + 2 H2O. Sphingolipid-delta-4-desaturase required for the biosynthesis of delta-4-unsaturated sphingolipids and derivatives. The protein is Sphingolipid delta(4)-desaturase DES1-like of Oryza sativa subsp. japonica (Rice).